The primary structure comprises 268 residues: Undecaprenyl-diphosphatase (268 aa).

Transmembrane regions (helical) follow at residues 4–24 (STTL…FIPV), 50–70 (IQLG…ISVI), 84–104 (AAVL…HGFI), 109–129 (FETP…LLFV), 144–164 (VPLG…VPGV), 184–204 (AAEF…AFDL), 214–234 (GALG…VLVV), and 245–265 (GYSL…AALL).

The protein belongs to the UppP family.

The protein localises to the cell inner membrane. The enzyme catalyses di-trans,octa-cis-undecaprenyl diphosphate + H2O = di-trans,octa-cis-undecaprenyl phosphate + phosphate + H(+). Catalyzes the dephosphorylation of undecaprenyl diphosphate (UPP). Confers resistance to bacitracin. This is Undecaprenyl-diphosphatase from Cereibacter sphaeroides (strain ATCC 17025 / ATH 2.4.3) (Rhodobacter sphaeroides).